We begin with the raw amino-acid sequence, 176 residues long: Phosphopantetheine adenylyltransferase (176 aa).

Threonine 11 is a binding site for substrate. ATP-binding positions include 11–12 (TF) and histidine 19. The substrate site is built by lysine 43, leucine 93, and arginine 107. Residues glutamate 117 and 141 to 147 (LSVVSSS) contribute to the ATP site.

Belongs to the bacterial CoaD family. Homohexamer. It depends on Mg(2+) as a cofactor.

It is found in the cytoplasm. The enzyme catalyses (R)-4'-phosphopantetheine + ATP + H(+) = 3'-dephospho-CoA + diphosphate. It participates in cofactor biosynthesis; coenzyme A biosynthesis; CoA from (R)-pantothenate: step 4/5. Its function is as follows. Reversibly transfers an adenylyl group from ATP to 4'-phosphopantetheine, yielding dephospho-CoA (dPCoA) and pyrophosphate. The sequence is that of Phosphopantetheine adenylyltransferase from Tropheryma whipplei (strain TW08/27) (Whipple's bacillus).